Reading from the N-terminus, the 251-residue chain is MSHLTTFLVFFLLAFVTYTYASGVFEVHNNCPYTVWAAATPVGGGRRLERGQSWWFWAPPGTKMARIWGRTNCNFDGAGRGWCQTGDCGGVLECKGWGKPPNTLAEYALNQFSNLDFWDISVIDGFNIPMSFGPTKPGPGKCHGIQCTANINGECPGSLRVPGGCNNPCTTFGGQQYCCTQGPCGPTELSRWFKQRCPDAYSYPQDDPTSTFTCTSWTTDYKVMFCPYGSAHNETTNFPLEMPTSTHEVAK.

The N-terminal stretch at 1 to 21 is a signal peptide; the sequence is MSHLTTFLVFFLLAFVTYTYA. Disulfide bonds link cysteine 31–cysteine 226, cysteine 73–cysteine 83, cysteine 88–cysteine 94, cysteine 142–cysteine 214, cysteine 147–cysteine 197, cysteine 155–cysteine 165, cysteine 169–cysteine 178, and cysteine 179–cysteine 184. A glycan (N-linked (GlcNAc...) asparagine) is linked at asparagine 233.

Belongs to the thaumatin family.

In Nicotiana tabacum (Common tobacco), this protein is Osmotin-like protein (OLPA).